Reading from the N-terminus, the 257-residue chain is UPF0246 protein CLL_A2361 (257 aa).

It belongs to the UPF0246 family.

This chain is UPF0246 protein CLL_A2361, found in Clostridium botulinum (strain Eklund 17B / Type B).